The following is a 279-amino-acid chain: Ribosomal RNA small subunit methyltransferase J (279 aa).

Residues 138–139 (ER) and D194 contribute to the S-adenosyl-L-methionine site.

The protein belongs to the methyltransferase superfamily. RsmJ family.

It is found in the cytoplasm. The enzyme catalyses guanosine(1516) in 16S rRNA + S-adenosyl-L-methionine = N(2)-methylguanosine(1516) in 16S rRNA + S-adenosyl-L-homocysteine + H(+). Its function is as follows. Specifically methylates the guanosine in position 1516 of 16S rRNA. This is Ribosomal RNA small subunit methyltransferase J from Acinetobacter baumannii (strain ATCC 17978 / DSM 105126 / CIP 53.77 / LMG 1025 / NCDC KC755 / 5377).